The chain runs to 559 residues: NXPE family member 3 (559 aa).

The signal sequence occupies residues 1 to 30; that stretch reads MWINFVKLRLFCCLLAVLMVVVLVVNVTQV. 3 N-linked (GlcNAc...) asparagine glycosylation sites follow: Asn-26, Asn-237, and Asn-346.

This sequence belongs to the NXPE family.

The protein localises to the secreted. This Bos taurus (Bovine) protein is NXPE family member 3 (NXPE3).